The following is a 143-amino-acid chain: uncharacterized protein (143 aa).

2 consecutive transmembrane segments (helical) span residues 20-39 (FKYC…WITV) and 113-135 (YFSL…ITGL).

It localises to the membrane. This is an uncharacterized protein from Saccharomyces cerevisiae (strain ATCC 204508 / S288c) (Baker's yeast).